We begin with the raw amino-acid sequence, 300 residues long: B1 kinase (300 aa).

Positions 16 to 282 (WVVGPLIGKG…ITMVNSLTYF (267 aa)) constitute a Protein kinase domain. Residues 22–30 (IGKGGFGSI) and lysine 45 contribute to the ATP site. Catalysis depends on aspartate 147, which acts as the Proton acceptor.

Belongs to the protein kinase superfamily. Ser/Thr protein kinase family. Poxviruses subfamily. As to quaternary structure, interacts with host JIP1; this interaction increases the amount of MAPK bound to JIP1 and subsequently increases the activity of transcription factors, such as JUN, that respond to these complexes. Interacts with protein OPG198; this interaction inhibits the repressive activity of OPG198 pseudokinase on viral replication factory formation. It depends on Mg(2+) as a cofactor. Autophosphorylated.

It localises to the virion. The protein localises to the host cytoplasm. The enzyme catalyses L-seryl-[protein] + ATP = O-phospho-L-seryl-[protein] + ADP + H(+). It carries out the reaction L-threonyl-[protein] + ATP = O-phospho-L-threonyl-[protein] + ADP + H(+). Functionally, essential serine/threonine-protein kinase that plays different role in the viral life cycle. Phosphorylates the host small ribosomal protein RACK1 thereby customizing the ribosomes to a state optimal for viral mRNAs (which contain poly-A leaders) but not for host mRNAs. Facilitates viral DNA replication by inhibiting host BANF1, a cellular host defense responsive to foreign DNA. Phosphorylates host BANF1 on serine and threonine residues; this leads to BANF1 relocalization to the cytoplasm, loss of dimerization and impaired DNA binding activity. Indeed, BANF1 activity depends on its DNA-binding property which is blocked by VPK1-mediated phosphorylation. Required for viral intermediate genes expression, probably by inhibiting host BANF1. Modulates cellular responses via host JUN by two different mechanisms, either by direct phosphorylation or by modulation of upstream JIP1-MAPK complexes. Seems to participate in the accumulation/processing of late proteins and thus in virion maturation. In addition, inhibits B12 repressive activity on viral DNA replication via a phosphorylation-dependent mechanism. This is B1 kinase (OPG187) from Homo sapiens (Human).